The primary structure comprises 325 residues: Geranylgeranyl transferase type-2 subunit beta (325 aa).

PFTB repeat units lie at residues 9-50 (KEKH…CVLD), 57-99 (KEEV…ATYD), 109-150 (KVRL…SILG), 157-198 (VDPA…AIAN), 208-249 (LEEI…AIIG), and 256-298 (YEKL…SLMG). Residues 183 to 185 (HAA) and 228 to 240 (RPSK…YSWW) each bind geranylgeranyl diphosphate. Residues aspartate 234, cysteine 236, and histidine 286 each contribute to the Zn(2+) site.

The protein belongs to the protein prenyltransferase subunit beta family. In terms of assembly, heterodimer of an alpha and a beta subunit. Zn(2+) serves as cofactor.

It carries out the reaction geranylgeranyl diphosphate + L-cysteinyl-[protein] = S-geranylgeranyl-L-cysteinyl-[protein] + diphosphate. Functionally, catalyzes the transfer of a geranyl-geranyl moiety from geranyl-geranyl pyrophosphate to proteins having the C-terminal -XCC or -XCXC, where both cysteines may become modified. Acts on YPT1 and SEC4. The chain is Geranylgeranyl transferase type-2 subunit beta (BET2) from Saccharomyces cerevisiae (strain ATCC 204508 / S288c) (Baker's yeast).